The primary structure comprises 757 residues: 5-methyltetrahydropteroyltriglutamate--homocysteine methyltransferase (757 aa).

Residues 15–18 (RELK) and K114 each bind 5-methyltetrahydropteroyltri-L-glutamate. L-homocysteine-binding positions include 428–430 (IGS) and E481. Residues 428-430 (IGS) and E481 each bind L-methionine. 5-methyltetrahydropteroyltri-L-glutamate is bound by residues 512 to 513 (RC) and W558. D596 provides a ligand contact to L-homocysteine. D596 is an L-methionine binding site. E602 is a binding site for 5-methyltetrahydropteroyltri-L-glutamate. H639, C641, and E663 together coordinate Zn(2+). Residue H692 is the Proton donor of the active site. Position 724 (C724) interacts with Zn(2+).

The protein belongs to the vitamin-B12 independent methionine synthase family. Requires Zn(2+) as cofactor.

The enzyme catalyses 5-methyltetrahydropteroyltri-L-glutamate + L-homocysteine = tetrahydropteroyltri-L-glutamate + L-methionine. The protein operates within amino-acid biosynthesis; L-methionine biosynthesis via de novo pathway; L-methionine from L-homocysteine (MetE route): step 1/1. Catalyzes the transfer of a methyl group from 5-methyltetrahydrofolate to homocysteine resulting in methionine formation. The chain is 5-methyltetrahydropteroyltriglutamate--homocysteine methyltransferase from Lactococcus lactis subsp. cremoris (strain SK11).